Here is a 482-residue protein sequence, read N- to C-terminus: tRNA sulfurtransferase (482 aa).

The region spanning 61–165 is the THUMP domain; the sequence is SAIRDALTRI…QDRLLLIKGR (105 aa). Residues 183 to 184, K265, G287, and Q296 contribute to the ATP site; that span reads LI. C344 and C456 are joined by a disulfide. Residues 404–482 enclose the Rhodanese domain; the sequence is FAPTDVLLDI…GFSNVKVYRP (79 aa). The active-site Cysteine persulfide intermediate is the C456.

It belongs to the ThiI family.

It is found in the cytoplasm. The enzyme catalyses [ThiI sulfur-carrier protein]-S-sulfanyl-L-cysteine + a uridine in tRNA + 2 reduced [2Fe-2S]-[ferredoxin] + ATP + H(+) = [ThiI sulfur-carrier protein]-L-cysteine + a 4-thiouridine in tRNA + 2 oxidized [2Fe-2S]-[ferredoxin] + AMP + diphosphate. The catalysed reaction is [ThiS sulfur-carrier protein]-C-terminal Gly-Gly-AMP + S-sulfanyl-L-cysteinyl-[cysteine desulfurase] + AH2 = [ThiS sulfur-carrier protein]-C-terminal-Gly-aminoethanethioate + L-cysteinyl-[cysteine desulfurase] + A + AMP + 2 H(+). Its pathway is cofactor biosynthesis; thiamine diphosphate biosynthesis. Its function is as follows. Catalyzes the ATP-dependent transfer of a sulfur to tRNA to produce 4-thiouridine in position 8 of tRNAs, which functions as a near-UV photosensor. Also catalyzes the transfer of sulfur to the sulfur carrier protein ThiS, forming ThiS-thiocarboxylate. This is a step in the synthesis of thiazole, in the thiamine biosynthesis pathway. The sulfur is donated as persulfide by IscS. The protein is tRNA sulfurtransferase of Pectobacterium carotovorum subsp. carotovorum (strain PC1).